A 183-amino-acid chain; its full sequence is MVTRVVLQQADISRALTRISHEILESNRGIDGLAILGIPTRGVVLARRIAESIQRIEQEAVGASADIVGALDVTMYRDDLARNPTRAPQPTSLPGPIDGKTVVLVDDVLFSGRTIRAALDALSDLGRPRAVRLAVLVDRGHRELPIRADFVGKNLPSAASERIFVRFAEVDGQDAVTIEEGGA.

The PRPP-binding motif lies at V102 to T114.

This sequence belongs to the purine/pyrimidine phosphoribosyltransferase family. PyrR subfamily.

It carries out the reaction UMP + diphosphate = 5-phospho-alpha-D-ribose 1-diphosphate + uracil. Regulates the transcription of the pyrimidine nucleotide (pyr) operon in response to exogenous pyrimidines. Its function is as follows. Also displays a weak uracil phosphoribosyltransferase activity which is not physiologically significant. In Leifsonia xyli subsp. xyli (strain CTCB07), this protein is Bifunctional protein PyrR.